The chain runs to 297 residues: Protein phosphatase PTC7 homolog (297 aa).

The transit peptide at 1 to 27 (MFSVLSCGRLVARAVFGGLSQTDSRDY) directs the protein to the mitochondrion. The region spanning 28–292 (SLVTASCGFG…DDITVLLSIV (265 aa)) is the PPM-type phosphatase domain. Positions 71, 72, and 216 each coordinate Mn(2+).

Belongs to the PP2C family. It depends on Mg(2+) as a cofactor. Mn(2+) is required as a cofactor.

Its subcellular location is the mitochondrion matrix. The enzyme catalyses O-phospho-L-seryl-[protein] + H2O = L-seryl-[protein] + phosphate. It carries out the reaction O-phospho-L-threonyl-[protein] + H2O = L-threonyl-[protein] + phosphate. Its function is as follows. Protein phosphatase which positively regulates biosynthesis of the ubiquinone, coenzyme Q. Dephosphorylates the ubiquinone biosynthesis protein coq7 which is likely to lead to its activation. This chain is Protein phosphatase PTC7 homolog (pptc7), found in Xenopus laevis (African clawed frog).